Here is a 524-residue protein sequence, read N- to C-terminus: Anthranilate synthase component 1 (524 aa).

L-tryptophan-binding positions include serine 55 and proline 297–methionine 299. Glycine 332–threonine 333 serves as a coordination point for chorismate. Residue glutamate 359 participates in Mg(2+) binding. Chorismate is bound by residues tyrosine 447, arginine 467, glycine 485–glycine 487, and glycine 487. A Mg(2+)-binding site is contributed by glutamate 500.

It belongs to the anthranilate synthase component I family. In terms of assembly, heterotetramer consisting of two non-identical subunits: a beta subunit (TrpG) and a large alpha subunit (TrpE). The cofactor is Mg(2+).

It catalyses the reaction chorismate + L-glutamine = anthranilate + pyruvate + L-glutamate + H(+). The protein operates within amino-acid biosynthesis; L-tryptophan biosynthesis; L-tryptophan from chorismate: step 1/5. With respect to regulation, feedback inhibited by tryptophan. Its function is as follows. Part of a heterotetrameric complex that catalyzes the two-step biosynthesis of anthranilate, an intermediate in the biosynthesis of L-tryptophan. In the first step, the glutamine-binding beta subunit (TrpG) of anthranilate synthase (AS) provides the glutamine amidotransferase activity which generates ammonia as a substrate that, along with chorismate, is used in the second step, catalyzed by the large alpha subunit of AS (TrpE) to produce anthranilate. In the absence of TrpG, TrpE can synthesize anthranilate directly from chorismate and high concentrations of ammonia. The protein is Anthranilate synthase component 1 (trpE) of Haloferax volcanii (strain ATCC 29605 / DSM 3757 / JCM 8879 / NBRC 14742 / NCIMB 2012 / VKM B-1768 / DS2) (Halobacterium volcanii).